The primary structure comprises 480 residues: ATP synthase subunit beta, chloroplastic (480 aa).

161 to 168 serves as a coordination point for ATP; sequence GGAGVGKT.

Belongs to the ATPase alpha/beta chains family. As to quaternary structure, F-type ATPases have 2 components, CF(1) - the catalytic core - and CF(0) - the membrane proton channel. CF(1) has five subunits: alpha(3), beta(3), gamma(1), delta(1), epsilon(1). CF(0) has four main subunits: a(1), b(1), b'(1) and c(9-12).

The protein resides in the plastid. Its subcellular location is the chloroplast thylakoid membrane. The catalysed reaction is ATP + H2O + 4 H(+)(in) = ADP + phosphate + 5 H(+)(out). In terms of biological role, produces ATP from ADP in the presence of a proton gradient across the membrane. The catalytic sites are hosted primarily by the beta subunits. This is ATP synthase subunit beta, chloroplastic from Euglena gracilis.